Here is a 122-residue protein sequence, read N- to C-terminus: Ribosome-binding factor A (122 aa).

The protein belongs to the RbfA family. Monomer. Binds 30S ribosomal subunits, but not 50S ribosomal subunits or 70S ribosomes.

It is found in the cytoplasm. Functionally, one of several proteins that assist in the late maturation steps of the functional core of the 30S ribosomal subunit. Associates with free 30S ribosomal subunits (but not with 30S subunits that are part of 70S ribosomes or polysomes). Required for efficient processing of 16S rRNA. May interact with the 5'-terminal helix region of 16S rRNA. This is Ribosome-binding factor A from Caldanaerobacter subterraneus subsp. tengcongensis (strain DSM 15242 / JCM 11007 / NBRC 100824 / MB4) (Thermoanaerobacter tengcongensis).